The primary structure comprises 159 residues: Endoribonuclease YbeY (159 aa).

Residues His117, His121, and His127 each coordinate Zn(2+).

The protein belongs to the endoribonuclease YbeY family. It depends on Zn(2+) as a cofactor.

It is found in the cytoplasm. Its function is as follows. Single strand-specific metallo-endoribonuclease involved in late-stage 70S ribosome quality control and in maturation of the 3' terminus of the 16S rRNA. This is Endoribonuclease YbeY from Azorhizobium caulinodans (strain ATCC 43989 / DSM 5975 / JCM 20966 / LMG 6465 / NBRC 14845 / NCIMB 13405 / ORS 571).